Here is a 252-residue protein sequence, read N- to C-terminus: 5'-nucleotidase SurE (252 aa).

A divalent metal cation contacts are provided by aspartate 8, aspartate 9, serine 39, and asparagine 96.

This sequence belongs to the SurE nucleotidase family. A divalent metal cation serves as cofactor.

The protein localises to the cytoplasm. It catalyses the reaction a ribonucleoside 5'-phosphate + H2O = a ribonucleoside + phosphate. In terms of biological role, nucleotidase that shows phosphatase activity on nucleoside 5'-monophosphates. The protein is 5'-nucleotidase SurE of Petrotoga mobilis (strain DSM 10674 / SJ95).